The primary structure comprises 465 residues: Cysteine--tRNA ligase (465 aa).

Residue C27 coordinates Zn(2+). The short motif at 29–39 (PTVYDDAHLGH) is the 'HIGH' region element. Zn(2+) contacts are provided by C207, H237, and E241. Positions 269 to 273 (KMSKS) match the 'KMSKS' region motif. K272 contributes to the ATP binding site.

Belongs to the class-I aminoacyl-tRNA synthetase family. Monomer. Requires Zn(2+) as cofactor.

The protein localises to the cytoplasm. It catalyses the reaction tRNA(Cys) + L-cysteine + ATP = L-cysteinyl-tRNA(Cys) + AMP + diphosphate. The polypeptide is Cysteine--tRNA ligase (Helicobacter pylori (strain P12)).